Reading from the N-terminus, the 285-residue chain is Ribosomal RNA large subunit methyltransferase F (285 aa).

This sequence belongs to the methyltransferase superfamily. METTL16/RlmF family.

Its subcellular location is the cytoplasm. The enzyme catalyses adenosine(1618) in 23S rRNA + S-adenosyl-L-methionine = N(6)-methyladenosine(1618) in 23S rRNA + S-adenosyl-L-homocysteine + H(+). Specifically methylates the adenine in position 1618 of 23S rRNA. The polypeptide is Ribosomal RNA large subunit methyltransferase F (Christiangramia forsetii (strain DSM 17595 / CGMCC 1.15422 / KT0803) (Gramella forsetii)).